Reading from the N-terminus, the 629-residue chain is 1-deoxy-D-xylulose-5-phosphate synthase (629 aa).

Residues H73 and 114–116 (GHA) each bind thiamine diphosphate. D145 serves as a coordination point for Mg(2+). Thiamine diphosphate is bound by residues 146-147 (GA), N174, Y284, and E360. N174 contacts Mg(2+).

It belongs to the transketolase family. DXPS subfamily. Homodimer. Mg(2+) is required as a cofactor. Requires thiamine diphosphate as cofactor.

The enzyme catalyses D-glyceraldehyde 3-phosphate + pyruvate + H(+) = 1-deoxy-D-xylulose 5-phosphate + CO2. The protein operates within metabolic intermediate biosynthesis; 1-deoxy-D-xylulose 5-phosphate biosynthesis; 1-deoxy-D-xylulose 5-phosphate from D-glyceraldehyde 3-phosphate and pyruvate: step 1/1. Catalyzes the acyloin condensation reaction between C atoms 2 and 3 of pyruvate and glyceraldehyde 3-phosphate to yield 1-deoxy-D-xylulose-5-phosphate (DXP). The chain is 1-deoxy-D-xylulose-5-phosphate synthase from Thermomicrobium roseum (strain ATCC 27502 / DSM 5159 / P-2).